The chain runs to 266 residues: PTS system sorbose-specific EIIC component (266 aa).

The 237-residue stretch at 1–237 folds into the PTS EIIC type-4 domain; that stretch reads MEISTLQIIA…GGVGVIIALI (237 aa). Transmembrane regions (helical) follow at residues 3 to 23, 33 to 53, 79 to 99, 100 to 120, 151 to 171, 183 to 203, and 219 to 239; these read ISTLQIIAIFIFSCIAGMGSV, LIACTVIGLILGDLKTGVMLG, IISAILVIVGHQSIAIGIAIA, LPVAAAGQVLTVFARTITVVF, VAIPALVVSLFVSADMVSSML, QIAGGFIVVVGYAMVLRMMGV, and YLDFSLLAFGGVGVIIALIYI.

The protein localises to the cell inner membrane. Functionally, the phosphoenolpyruvate-dependent sugar phosphotransferase system (PTS), a major carbohydrate active transport system, catalyzes the phosphorylation of incoming sugar substrates concomitant with their translocation across the cell membrane. The enzyme II SorABFM PTS system is involved in L-sorbose transport. The protein is PTS system sorbose-specific EIIC component of Klebsiella pneumoniae.